The sequence spans 506 residues: L-amino-acid oxidase (506 aa).

The signal sequence occupies residues 1 to 18 (MNVFFTFSLLFLAALGSC). Cysteines 28 and 191 form a disulfide. Residue glutamate 36 coordinates Zn(2+). Residues 61–62 (MS), serine 62, 81–82 (EA), arginine 89, and 105–108 (GPMR) each bind FAD. Arginine 108 is a binding site for substrate. Zn(2+) contacts are provided by glutamate 111, glutamate 118, and glutamate 150. An N-linked (GlcNAc...) asparagine glycan is attached at asparagine 190. Residue aspartate 219 coordinates Zn(2+). A substrate-binding site is contributed by histidine 241. Residue glutamate 248 coordinates Zn(2+). Valine 279 provides a ligand contact to FAD. Residues glutamate 299 and histidine 332 each coordinate Zn(2+). Cysteine 349 and cysteine 430 are joined by a disulfide. Tyrosine 390 is a substrate binding site. Zn(2+) is bound at residue histidine 458. Residues glutamate 475 and 482 to 487 (GWIDST) contribute to the FAD site. Residue 482 to 483 (GW) coordinates substrate.

Belongs to the flavin monoamine oxidase family. FIG1 subfamily. In terms of assembly, homodimer; non-covalently linked. Stabilized by a single zinc-binding site located at the dimer interface (Asp-219, His-332 and His-458). Other zinc-bind sites can be understood as transient and non-specific, and appear due to the high concentration of zinc ions used in the crystallization experiments. It depends on FAD as a cofactor. As to expression, expressed by the venom gland.

Its subcellular location is the secreted. The catalysed reaction is an L-alpha-amino acid + O2 + H2O = a 2-oxocarboxylate + H2O2 + NH4(+). The enzyme catalyses L-leucine + O2 + H2O = 4-methyl-2-oxopentanoate + H2O2 + NH4(+). It catalyses the reaction L-phenylalanine + O2 + H2O = 3-phenylpyruvate + H2O2 + NH4(+). It carries out the reaction L-tryptophan + O2 + H2O = indole-3-pyruvate + H2O2 + NH4(+). The catalysed reaction is L-methionine + O2 + H2O = 4-methylsulfanyl-2-oxobutanoate + H2O2 + NH4(+). The enzyme catalyses L-isoleucine + O2 + H2O = (S)-3-methyl-2-oxopentanoate + H2O2 + NH4(+). It catalyses the reaction L-tyrosine + O2 + H2O = 3-(4-hydroxyphenyl)pyruvate + H2O2 + NH4(+). In terms of biological role, catalyzes an oxidative deamination of predominantly hydrophobic and aromatic L-amino acids, thus producing hydrogen peroxide that may contribute to the diverse toxic effects of this enzyme. Shows high catalytic activity against L-Met, L-Leu, L-Phe, L-Trp, L-Tyr, L-Ile. Shows no or weak activity on L-Cys, L-Val, L-Gln, L-Thr, L-Ser, L-Lys, L-Arg, L-Asn, L-Glu, L-Gly, L-Pro, L-Asp and L-His. Induces platelet aggregation in platelet-rich plasma, probably due to hydrogen peroxide production, since catalase inhibits aggregation effect. Induces moderate mouse paw edema. Induces apoptosis and shows cytotoxicity against several cancer cell lines, which is inhibited by catalase. Shows hemolytic activity and antibacterial activities against both Gram-positive and Gram-negative bacteria. Has parasiticidal activities against both trypanosomes and leishmania, as a result of enzyme-catalyzed hydrogen peroxide production. Unlike other snake venom L-amino acid oxidases, does not induce hemorrhage (with 50 ug of enzyme). The protein is L-amino-acid oxidase of Bothrops atrox (Barba amarilla).